The primary structure comprises 491 residues: MLIRCVAVAKTRFNTTGVVSRLVSSLADGSDTSSVANRNSLKEILRKNGPRRSVTSLLQERIDSGHAVSLSELRLISKRLIRSNRYDLALQMMEWMENQKDIEFSVYDIALRLDLIIKTHGLKQGEEYFEKLLHSSVSMRVAKSAYLPLLRAYVKNKMVKEAEALMEKLNGLGFLVTPHPFNEMMKLYEASGQYEKVVMVVSMMKGNKIPRNVLSYNLWMNACCEVSGVAAVETVYKEMVGDKSVEVGWSSLCTLANVYIKSGFDEKARLVLEDAEKMLNRSNRLGYFFLITLYASLGNKEGVVRLWEVSKSVCGRISCVNYICVLSSLVKTGDLEEAERVFSEWEAQCFNYDVRVSNVLLGAYVRNGEIRKAESLHGCVLERGGTPNYKTWEILMEGWVKCENMEKAIDAMHQVFVLMRRCHWRPSHNIVMAIAEYFEKEEKIEEATAYVRDLHRLGLASLPLYRLLLRMHEHAKRPAYDIYEMMKLDKL.

10 PPR repeats span residues 69 to 99, 105 to 139, 142 to 176, 177 to 211, 212 to 246, 248 to 278, 283 to 313, 318 to 348, 353 to 387, and 388 to 426; these read SLSE…MENQ, SVYD…SVSM, AKSA…GFLV, TPHP…KIPR, NVLS…KSVE, GWSS…AEKM, NRLG…SKSV, SCVN…WEAQ, DVRV…GGTP, and NYKT…HWRP.

Belongs to the PPR family. P subfamily.

This chain is Pentatricopeptide repeat-containing protein At5g27460, found in Arabidopsis thaliana (Mouse-ear cress).